Reading from the N-terminus, the 360-residue chain is 3-isopropylmalate dehydrogenase (360 aa).

Residue 76–89 coordinates NAD(+); it reads GPKWEPLDYSLRPE. Residues Arg96, Arg106, Arg134, and Asp224 each contribute to the substrate site. Mg(2+) contacts are provided by Asp224, Asp248, and Asp252. 282–294 provides a ligand contact to NAD(+); the sequence is GSAPDIAGRGIAN.

Belongs to the isocitrate and isopropylmalate dehydrogenases family. LeuB type 1 subfamily. As to quaternary structure, homodimer. Mg(2+) serves as cofactor. It depends on Mn(2+) as a cofactor.

It is found in the cytoplasm. The catalysed reaction is (2R,3S)-3-isopropylmalate + NAD(+) = 4-methyl-2-oxopentanoate + CO2 + NADH. It functions in the pathway amino-acid biosynthesis; L-leucine biosynthesis; L-leucine from 3-methyl-2-oxobutanoate: step 3/4. Its function is as follows. Catalyzes the oxidation of 3-carboxy-2-hydroxy-4-methylpentanoate (3-isopropylmalate) to 3-carboxy-4-methyl-2-oxopentanoate. The product decarboxylates to 4-methyl-2 oxopentanoate. The sequence is that of 3-isopropylmalate dehydrogenase from Methylococcus capsulatus (strain ATCC 33009 / NCIMB 11132 / Bath).